The chain runs to 464 residues: A-type ATP synthase subunit B (464 aa).

It belongs to the ATPase alpha/beta chains family. As to quaternary structure, has multiple subunits with at least A(3), B(3), C, D, E, F, H, I and proteolipid K(x).

It localises to the cell membrane. Component of the A-type ATP synthase that produces ATP from ADP in the presence of a proton gradient across the membrane. The B chain is a regulatory subunit. This chain is A-type ATP synthase subunit B, found in Methanococcus aeolicus (strain ATCC BAA-1280 / DSM 17508 / OCM 812 / Nankai-3).